The primary structure comprises 233 residues: DnaA regulatory inactivator Hda (233 aa).

Belongs to the DnaA family. HdA subfamily. As to quaternary structure, the active form seems to be an ADP-bound monomer. Forms the RIDA complex (regulatory inactivation of DnaA) of ATP-DnaA, ADP-Hda and the DNA-loaded beta sliding clamp (dnaN).

Mediates the interaction of DNA replication initiator protein DnaA with DNA polymerase subunit beta sliding clamp (dnaN). Stimulates hydrolysis of ATP-DnaA to ADP-DnaA, rendering DnaA inactive for reinitiation, a process called regulatory inhibition of DnaA or RIDA. The protein is DnaA regulatory inactivator Hda of Escherichia fergusonii (strain ATCC 35469 / DSM 13698 / CCUG 18766 / IAM 14443 / JCM 21226 / LMG 7866 / NBRC 102419 / NCTC 12128 / CDC 0568-73).